The chain runs to 208 residues: Protein TIC 20-II, chloroplastic (208 aa).

Residues methionine 1 to arginine 49 constitute a chloroplast transit peptide. The next 4 helical transmembrane spans lie at valine 61–alanine 83, leucine 101–valine 121, alanine 134–leucine 154, and threonine 172–glycine 192.

It belongs to the Tic20 family. As to quaternary structure, part of the Tic complex. As to expression, expressed in leaves, siliques and roots.

Its subcellular location is the plastid. The protein localises to the chloroplast inner membrane. In terms of biological role, may be involved in protein precursor import into chloroplasts. Not redundant with TIC20-I, TIC20-IV or TIC20-V. This is Protein TIC 20-II, chloroplastic (TIC20-II) from Arabidopsis thaliana (Mouse-ear cress).